Consider the following 840-residue polypeptide: Exocyst complex component 7 (840 aa).

A disordered region spans residues 1 to 112 (MSAPPRLSAR…ATSTTSPFSY (112 aa)). Over residues 19–31 (SNAPSPTSPTGLK) the composition is skewed to polar residues. Composition is skewed to low complexity over residues 50–73 (KSSV…TLPK) and 83–111 (QQQQ…SPFS). The stretch at 193 to 227 (KNNATSELTEQDDQLENDKRDLQFIKEQLEKNNSM) forms a coiled coil. The interval 601–638 (QDNNNSNSNSNAPSSTSSNSKSSSSSSSSSSSNSASST) is disordered. The span at 603-637 (NNNSNSNSNAPSSTSSNSKSSSSSSSSSSSNSASS) shows a compositional bias: low complexity.

It belongs to the EXO70 family. In terms of assembly, the exocyst complex is composed of sec3/exoc1, sec5/exoc2, sec6/exoc3, sec8/exoc4, sec10/exoc5, sec15/exoc6, exo70/exoc7 and exo84/exoc8.

The protein resides in the cytoplasm. Its subcellular location is the cytosol. It is found in the cell membrane. The protein localises to the midbody. It localises to the midbody ring. Functionally, component of the exocyst complex involved in the docking of exocytic vesicles with fusion sites on the plasma membrane. This chain is Exocyst complex component 7 (exoc7), found in Dictyostelium discoideum (Social amoeba).